We begin with the raw amino-acid sequence, 339 residues long: MRKLKDIKPLELKDDVLYVINQLKLPHELVWEKLETLADYEKAIKDMIVRGAPLIGIVGAYGFYTGIKEGIDYIQVYERLKQTRPTAVNLFWALDRMKSIYEKYGNDLNLLLKEAKRIEVEDYHANRSIGGYGEVLIPKKANILTHCNTGALATAGWGTALGIIRSAFENDKDITVYVDETRPYLQGSRLTAWELLREGIPHYIITDSSAGFLMKKGMIDVIVVGADRITLNGDVANKIGTYSLSILAKHHNIPFYVAAPSSSLDFNLESGDEIPIEERNEDEVKNCHCCKVAPQQSHALNYSFDITPADNITAIITEKGIIEKPNKEKILKFFGRKLS.

Substrate is bound by residues arginine 50–alanine 52, arginine 84, and glutamine 186. Aspartate 227 serves as the catalytic Proton donor. Substrate is bound at residue asparagine 237 to lysine 238.

The protein belongs to the eIF-2B alpha/beta/delta subunits family. MtnA subfamily.

It catalyses the reaction 5-(methylsulfanyl)-alpha-D-ribose 1-phosphate = 5-(methylsulfanyl)-D-ribulose 1-phosphate. It participates in amino-acid biosynthesis; L-methionine biosynthesis via salvage pathway; L-methionine from S-methyl-5-thio-alpha-D-ribose 1-phosphate: step 1/6. Catalyzes the interconversion of methylthioribose-1-phosphate (MTR-1-P) into methylthioribulose-1-phosphate (MTRu-1-P). The sequence is that of Methylthioribose-1-phosphate isomerase from Sulfurihydrogenibium sp. (strain YO3AOP1).